Here is an 89-residue protein sequence, read N- to C-terminus: Small ribosomal subunit protein uS15 (89 aa).

The span at 1–10 (MSITAERKAE) shows a compositional bias: basic and acidic residues. The tract at residues 1 to 24 (MSITAERKAEVIQGNANKAGDTGS) is disordered.

The protein belongs to the universal ribosomal protein uS15 family. As to quaternary structure, part of the 30S ribosomal subunit. Forms a bridge to the 50S subunit in the 70S ribosome, contacting the 23S rRNA.

One of the primary rRNA binding proteins, it binds directly to 16S rRNA where it helps nucleate assembly of the platform of the 30S subunit by binding and bridging several RNA helices of the 16S rRNA. Functionally, forms an intersubunit bridge (bridge B4) with the 23S rRNA of the 50S subunit in the ribosome. The chain is Small ribosomal subunit protein uS15 from Rhodopseudomonas palustris (strain BisB5).